The sequence spans 681 residues: Minichromosome maintenance domain-containing protein 2 (681 aa).

Ser-292 bears the Phosphoserine mark. One can recognise an MCM domain in the interval 533–621; it reads RQFTTEDFEK…LIAALLFETS (89 aa).

In terms of biological role, plays an important role in meiotic recombination and associated DNA double-strand break repair. The protein is Minichromosome maintenance domain-containing protein 2 (MCMDC2) of Homo sapiens (Human).